Here is a 553-residue protein sequence, read N- to C-terminus: Cytokine-like nuclear factor N-PAC (553 aa).

A PWWP domain is found at 8–66; the sequence is LGDLVWGKLGRYPPWPGKIVNPPKDLKKPRGKKCFFVKFFGTEDHAWIKVEQLKPYHAH. 2 stretches are compositionally biased toward basic and acidic residues: residues 92-145 and 162-182; these read RAKG…EGKK and RAQE…KDLT. The disordered stretch occupies residues 92–188; sequence RAKGKDQTSS…KDLTIPESST (97 aa). At Ser130 the chain carries Phosphoserine. Lys135 participates in a covalent cross-link: Glycyl lysine isopeptide (Lys-Gly) (interchain with G-Cter in SUMO2). Phosphoserine is present on Ser167. Residues 168-180 constitute a DNA-binding region (a.T hook); the sequence is PRKRGRPPKDEKD. Residues Lys176, Lys179, Lys201, and Lys211 each participate in a glycyl lysine isopeptide (Lys-Gly) (interchain with G-Cter in SUMO2) cross-link. Residues 214–217 form an interaction with histone H3 region; that stretch reads DPHF. The segment at 216 to 225 is interaction with KDM1B; the sequence is HFHHFLLSQT. Residues Lys227, Lys237, Lys240, and Lys269 each participate in a glycyl lysine isopeptide (Lys-Gly) (interchain with G-Cter in SUMO2) cross-link. Positions 261 to 553 are dehydrogenase domain; it reads GSITPTDKKI…MSAVYRAYIH (293 aa). Residue 271 to 285 participates in NAD(+) binding; the sequence is GFLGLGLMGSGIVSN. Lys302 participates in a covalent cross-link: Glycyl lysine isopeptide (Lys-Gly) (interchain with G-Cter in SUMO2). 2 residues coordinate NAD(+): Thr362 and Lys505. Residue Ser540 is modified to Phosphoserine.

This sequence belongs to the HIBADH-related family. NP60 subfamily. Homotetramere. Interacts with MAPK14. Interacts with KDM1B at nucleosomes; this interaction stimulates H3K4me1 and H3K4me2 demethylation. Binds to mononucleosomes. Interacts with GATA4; the interaction is required for a synergistic activation of GATA4 target genes transcription.

It localises to the nucleus. Its subcellular location is the chromosome. In terms of biological role, cytokine-like nuclear factor with chromatin gene reader activity involved in chromatin modification and regulation of gene expression. Acts as a nucleosome-destabilizing factor that is recruited to genes during transcriptional activation. Recognizes and binds histone H3 without a preference for specific epigenetic markers and also binds DNA. Interacts with KDM1B and promotes its histone demethylase activity by facilitating the capture of H3 tails, they form a multifunctional enzyme complex that modifies transcribed chromatin and facilitates Pol II transcription through nucleosomes. Stimulates the acetylation of 'Lys-56' of nucleosomal histone H3 (H3K56ac) by EP300. With GATA4, co-binds a defined set of heart development genes and coregulates their expression during cardiomyocyte differentiation. Regulates p38 MAP kinase activity by mediating stress activation of MAPK14/p38alpha and specifically regulating MAPK14 signaling. Indirectly promotes phosphorylation of MAPK14 and activation of ATF2. The phosphorylation of MAPK14 requires upstream activity of MAP2K4 and MAP2K6. The polypeptide is Cytokine-like nuclear factor N-PAC (GLYR1) (Pongo abelii (Sumatran orangutan)).